A 32-amino-acid chain; its full sequence is MVGEIVESAVLSSVLVLVGLAIGFLLLKVQGE.

Residues 9–27 (AVLSSVLVLVGLAIGFLLL) traverse the membrane as a helical segment.

This sequence belongs to the PetM family. As to quaternary structure, the 4 large subunits of the cytochrome b6-f complex are cytochrome b6, subunit IV (17 kDa polypeptide, PetD), cytochrome f and the Rieske protein, while the 4 small subunits are PetG, PetL, PetM and PetN. The complex functions as a dimer.

It localises to the plastid. Its subcellular location is the chloroplast thylakoid membrane. In terms of biological role, component of the cytochrome b6-f complex, which mediates electron transfer between photosystem II (PSII) and photosystem I (PSI), cyclic electron flow around PSI, and state transitions. The sequence is that of Cytochrome b6-f complex subunit 7 from Pyropia yezoensis (Susabi-nori).